The primary structure comprises 332 residues: 2,3-diketo-L-gulonate reductase (332 aa).

Histidine 44 acts as the Proton donor in catalysis. NAD(+) is bound by residues 168–174, 224–225, and 304–306; these read ITMVDMS, WK, and GHE.

Belongs to the LDH2/MDH2 oxidoreductase family. DlgD subfamily. Homodimer.

Its subcellular location is the cytoplasm. The enzyme catalyses 3-dehydro-L-gulonate + NAD(+) = 2,3-dioxo-L-gulonate + NADH + H(+). It catalyses the reaction 3-dehydro-L-gulonate + NADP(+) = 2,3-dioxo-L-gulonate + NADPH + H(+). Catalyzes the reduction of 2,3-diketo-L-gulonate in the presence of NADH, to form 3-keto-L-gulonate. In Escherichia coli (strain SMS-3-5 / SECEC), this protein is 2,3-diketo-L-gulonate reductase.